Here is a 158-residue protein sequence, read N- to C-terminus: Urease accessory protein UreE (158 aa).

The segment at 133–158 is disordered; the sequence is PEGGAYQAHSHDGHSHHQGHTHDHHD. A compositionally biased stretch (basic and acidic residues) spans 141–158; sequence HSHDGHSHHQGHTHDHHD.

This sequence belongs to the UreE family.

The protein resides in the cytoplasm. Functionally, involved in urease metallocenter assembly. Binds nickel. Probably functions as a nickel donor during metallocenter assembly. In Chelativorans sp. (strain BNC1), this protein is Urease accessory protein UreE.